A 14507-amino-acid chain; its full sequence is MLKPSGLPGSSSPTRSLMTGSRSTKATPEMDSGLTGATLSPKTSTGAIVVTEHTLPFTSPDKTLASPTSSVVGRTTQSLGVMSSALPESTSRGMTHSEQRTSPSLSPQVNGTPSRNYPATSMVSGLSSPRTRTSSTEGNFTKEASTYTLTVETTSGPVTEKYTVPTETSTTEGDSTETPWDTRYIPVKITSPMKTFADSTASKENAPVSMTPAETTVTDSHTPGRTNPSFGTLYSSFLDLSPKGTPNSRGETSLELILSTTGYPFSSPEPGSAGHSRISTSAPLSSSASVLDNKISETSIFSGQSLTSPLSPGVPEARASTMPNSAIPFSMTLSNAETSAERVRSTISSLGTPSISTKQTAETILTFHAFAETMDIPSTHIAKTLASEWLGSPGTLGGTSTSALTTTSPSTTLVSEETNTHHSTSGKETEGTLNTSMTPLETSAPGEESEMTATLVPTLGFTTLDSKIRSPSQVSSSHPTRELRTTGSTSGRQSSSTAAHGSSDILRATTSSTSKASSWTSESTAQQFSEPQHTQWVETSPSMKTERPPASTSVAAPITTSVPSVVSGFTTLKTSSTKGIWLEETSADTLIGESTAGPTTHQFAVPTGISMTGGSSTRGSQGTTHLLTRATASSETSADLTLATNGVPVSVSPAVSKTAAGSSPPGGTKPSYTMVSSVIPETSSLQSSAFREGTSLGLTPLNTRHPFSSPEPDSAGHTKISTSIPLLSSASVLEDKVSATSTFSHHKATSSITTGTPEISTKTKPSSAVLSSMTLSNAATSPERVRNATSPLTHPSPSGEETAGSVLTLSTSAETTDSPNIHPTGTLTSESSESPSTLSLPSVSGVKTTFSSSTPSTHLFTSGEETEETSNPSVSQPETSVSRVRTTLASTSVPTPVFPTMDTWPTRSAQFSSSHLVSELRATSSTSVTNSTGSALPKISHLTGTATMSQTNRDTFNDSAAPQSTTWPETSPRFKTGLPSATTTVSTSATSLSATVMVSKFTSPATSSMEATSIREPSTTILTTETTNGPGSMAVASTNIPIGKGYITEGRLDTSHLPIGTTASSETSMDFTMAKESVSMSVSPSQSMDAAGSSTPGRTSQFVDTFSDDVYHLTSREITIPRDGTSSALTPQMTATHPPSPDPGSARSTWLGILSSSPSSPTPKVTMSSTFSTQRVTTSMIMDTVETSRWNMPNLPSTTSLTPSNIPTSGAIGKSTLVPLDTPSPATSLEASEGGLPTLSTYPESTNTPSIHLGAHASSESPSTIKLTMASVVKPGSYTPLTFPSIETHIHVSTARMAYSSGSSPEMTAPGETNTGSTWDPTTYITTTDPKDTSSAQVSTPHSVRTLRTTENHPKTESATPAAYSGSPKISSSPNLTSPATKAWTITDTTEHSTQLHYTKLAEKSSGFETQSAPGPVSVVIPTSPTIGSSTLELTSDVPGEPLVLAPSEQTTITLPMATWLSTSLTEEMASTDLDISSPSSPMSTFAIFPPMSTPSHELSKSEADTSAIRNTDSTTLDQHLGIRSLGRTGDLTTVPITPLTTTWTSVIEHSTQAQDTLSATMSPTHVTQSLKDQTSIPASASPSHLTEVYPELGTQGRSSSEATTFWKPSTDTLSREIETGPTNIQSTPPMDNTTTGSSSSGVTLGIAHLPIGTSSPAETSTNMALERRSSTATVSMAGTMGLLVTSAPGRSISQSLGRVSSVLSESTTEGVTDSSKGSSPRLNTQGNTALSSSLEPSYAEGSQMSTSIPLTSSPTTPDVEFIGGSTFWTKEVTTVMTSDISKSSARTESSSATLMSTALGSTENTGKEKLRTASMDLPSPTPSMEVTPWISLTLSNAPNTTDSLDLSHGVHTSSAGTLATDRSLNTGVTRASRLENGSDTSSKSLSMGNSTHTSMTYTEKSEVSSSIHPRPETSAPGAETTLTSTPGNRAISLTLPFSSIPVEEVISTGITSGPDINSAPMTHSPITPPTIVWTSTGTIEQSTQPLHAVSSEKVSVQTQSTPYVNSVAVSASPTHENSVSSGSSTSSPYSSASLESLDSTISRRNAITSWLWDLTTSLPTTTWPSTSLSEALSSGHSGVSNPSSTTTEFPLFSAASTSAAKQRNPETETHGPQNTAASTLNTDASSVTGLSETPVGASISSEVPLPMAITSRSDVSGLTSESTANPSLGTASSAGTKLTRTISLPTSESLVSFRMNKDPWTVSIPLGSHPTTNTETSIPVNSAGPPGLSTVASDVIDTPSDGAESIPTVSFSPSPDTEVTTISHFPEKTTHSFRTISSLTHELTSRVTPIPGDWMSSAMSTKPTGASPSITLGERRTITSAAPTTSPIVLTASFTETSTVSLDNETTVKTSDILDARKTNELPSDSSSSSDLINTSIASSTMDVTKTASISPTSISGMTASSSPSLFSSDRPQVPTSTTETNTATSPSVSSNTYSLDGGSNVGGTPSTLPPFTITHPVETSSALLAWSRPVRTFSTMVSTDTASGENPTSSNSVVTSVPAPGTWTSVGSTTDLPAMGFLKTSPAGEAHSLLASTIEPATAFTPHLSAAVVTGSSATSEASLLTTSESKAIHSSPQTPTTPTSGANWETSATPESLLVVTETSDTTLTSKILVTDTILFSTVSTPPSKFPSTGTLSGASFPTLLPDTPAIPLTATEPTSSLATSFDSTPLVTIASDSLGTVPETTLTMSETSNGDALVLKTVSNPDRSIPGITIQGVTESPLHPSSTSPSKIVAPRNTTYEGSITVALSTLPAGTTGSLVFSQSSENSETTALVDSSAGLERASVMPLTTGSQGMASSGGIRSGSTHSTGTKTFSSLPLTMNPGEVTAMSEITTNRLTATQSTAPKGIPVKPTSAESGLLTPVSASSSPSKAFASLTTAPPTWGIPQSTLTFEFSEVPSLDTKSASLPTPGQSLNTIPDSDASTASSSLSKSPEKNPRARMMTSTKAISASSFQSTGFTETPEGSASPSMAGHEPRVPTSGTGDPRYASESMSYPDPSKASSAMTSTSLASKLTTLFSTGQAARSGSSSSPISLSTEKETSFLSPTASTSRKTSLFLGPSMARQPNILVHLQTSALTLSPTSTLNMSQEEPPELTSSQTIAEEEGTTAETQTLTFTPSETPTSLLPVSSPTEPTARRKSSPETWASSISVPAKTSLVETTDGTLVTTIKMSSQAAQGNSTWPAPAEETGSSPAGTSPGSPEMSTTLKIMSSKEPSISPEIRSTVRNSPWKTPETTVPMETTVEPVTLQSTALGSGSTSISHLPTGTTSPTKSPTENMLATERVSLSPSPPEAWTNLYSGTPGGTRQSLATMSSVSLESPTARSITGTGQQSSPELVSKTTGMEFSMWHGSTGGTTGDTHVSLSTSSNILEDPVTSPNSVSSLTDKSKHKTETWVSTTAIPSTVLNNKIMAAEQQTSRSVDEAYSSTSSWSDQTSGSDITLGASPDVTNTLYITSTAQTTSLVSLPSGDQGITSLTNPSGGKTSSASSVTSPSIGLETLRANVSAVKSDIAPTAGHLSQTSSPAEVSILDVTTAPTPGISTTITTMGTNSISTTTPNPEVGMSTMDSTPATERRTTSTEHPSTWSSTAASDSWTVTDMTSNLKVARSPGTISTMHTTSFLASSTELDSMSTPHGRITVIGTSLVTPSSDASAVKTETSTSERTLSPSDTTASTPISTFSRVQRMSISVPDILSTSWTPSSTEAEDVPVSMVSTDHASTKTDPNTPLSTFLFDSLSTLDWDTGRSLSSATATTSAPQGATTPQELTLETMISPATSQLPFSIGHITSAVTPAAMARSSGVTFSRPDPTSKKAEQTSTQLPTTTSAHPGQVPRSAATTLDVIPHTAKTPDATFQRQGQTALTTEARATSDSWNEKEKSTPSAPWITEMMNSVSEDTIKEVTSSSSVLRTLNTLDINLESGTTSSPSWKSSPYERIAPSESTTDKEAIHPSTNTVETTGWVTSSEHASHSTIPAHSASSKLTSPVVTTSTREQAIVSMSTTTWPESTRARTEPNSFLTIELRDVSPYMDTSSTTQTSIISSPGSTAITKGPRTEITSSKRISSSFLAQSMRSSDSPSEAITRLSNFPAMTESGGMILAMQTSPPGATSLSAPTLDTSATASWTGTPLATTQRFTYSEKTTLFSKGPEDTSQPSPPSVEETSSSSSLVPIHATTSPSNILLTSQGHSPSSTPPVTSVFLSETSGLGKTTDMSRISLEPGTSLPPNLSSTAGEALSTYEASRDTKAIHHSADTAVTNMEATSSEYSPIPGHTKPSKATSPLVTSHIMGDITSSTSVFGSSETTEIETVSSVNQGLQERSTSQVASSATETSTVITHVSSGDATTHVTKTQATFSSGTSISSPHQFITSTNTFTDVSTNPSTSLIMTESSGVTITTQTGPTGAATQGPYLLDTSTMPYLTETPLAVTPDFMQSEKTTLISKGPKDVSWTSPPSVAETSYPSSLTPFLVTTIPPATSTLQGQHTSSPVSATSVLTSGLVKTTDMLNTSMEPVTNSPQNLNNPSNEILATLAATTDIETIHPSINKAVTNMGTASSAHVLHSTLPVSSEPSTATSPMVPASSMGDALASISIPGSETTDIEGEPTSSLTAGRKENSTLQEMNSTTESNIILSNVSVGAITEATKMEVPSFDATFIPTPAQSTKFPDIFSVASSRLSNSPPMTISTHMTTTQTGSSGATSKIPLALDTSTLETSAGTPSVVTEGFAHSKITTAMNNDVKDVSQTNPPFQDEASSPSSQAPVLVTTLPSSVAFTPQWHSTSSPVSMSSVLTSSLVKTAGKVDTSLETVTSSPQSMSNTLDDISVTSAATTDIETTHPSINTVVTNVGTTGSAFESHSTVSAYPEPSKVTSPNVTTSTMEDTTISRSIPKSSKTTRTETETTSSLTPKLRETSISQEITSSTETSTVPYKELTGATTEVSRTDVTSSSSTSFPGPDQSTVSLDISTETNTRLSTSPIMTESAEITITTQTGPHGATSQDTFTMDPSNTTPQAGIHSAMTHGFSQLDVTTLMSRIPQDVSWTSPPSVDKTSSPSSFLSSPAMTTPSLISSTLPEDKLSSPMTSLLTSGLVKITDILRTRLEPVTSSLPNFSSTSDKILATSKDSKDTKEIFPSINTEETNVKANNSGHESHSPALADSETPKATTQMVITTTVGDPAPSTSMPVHGSSETTNIKREPTYFLTPRLRETSTSQESSFPTDTSFLLSKVPTGTITEVSSTGVNSSSKISTPDHDKSTVPPDTFTGEIPRVFTSSIKTKSAEMTITTQASPPESASHSTLPLDTSTTLSQGGTHSTVTQGFPYSEVTTLMGMGPGNVSWMTTPPVEETSSVSSLMSSPAMTSPSPVSSTSPQSIPSSPLPVTALPTSVLVTTTDVLGTTSPESVTSSPPNLSSITHERPATYKDTAHTEAAMHHSTNTAVTNVGTSGSGHKSQSSVLADSETSKATPLMSTTSTLGDTSVSTSTPNISQTNQIQTEPTASLSPRLRESSTSEKTSSTTETNTAFSYVPTGAITQASRTEISSSRTSISDLDRPTIAPDISTGMITRLFTSPIMTKSAEMTVTTQTTTPGATSQGILPWDTSTTLFQGGTHSTVSQGFPHSEITTLRSRTPGDVSWMTTPPVEETSSGFSLMSPSMTSPSPVSSTSPESIPSSPLPVTALLTSVLVTTTNVLGTTSPEPVTSSPPNLSSPTQERLTTYKDTAHTEAMHASMHTNTAVANVGTSISGHESQSSVPADSHTSKATSPMGITFAMGDTSVSTSTPAFFETRIQTESTSSLIPGLRDTRTSEEINTVTETSTVLSEVPTTTTTEVSRTEVITSSRTTISGPDHSKMSPYISTETITRLSTFPFVTGSTEMAITNQTGPIGTISQATLTLDTSSTASWEGTHSPVTQRFPHSEETTTMSRSTKGVSWQSPPSVEETSSPSSPVPLPAITSHSSLYSAVSGSSPTSALPVTSLLTSGRRKTIDMLDTHSELVTSSLPSASSFSGEILTSEASTNTETIHFSENTAETNMGTTNSMHKLHSSVSIHSQPSGHTPPKVTGSMMEDAIVSTSTPGSPETKNVDRDSTSPLTPELKEDSTALVMNSTTESNTVFSSVSLDAATEVSRAEVTYYDPTFMPASAQSTKSPDISPEASSSHSNSPPLTISTHKTIATQTGPSGVTSLGQLTLDTSTIATSAGTPSARTQDFVDSETTSVMNNDLNDVLKTSPFSAEEANSLSSQAPLLVTTSPSPVTSTLQEHSTSSLVSVTSVPTPTLAKITDMDTNLEPVTRSPQNLRNTLATSEATTDTHTMHPSINTAVANVGTTSSPNEFYFTVSPDSDPYKATSAVVITSTSGDSIVSTSMPRSSAMKKIESETTFSLIFRLRETSTSQKIGSSSDTSTVFDKAFTAATTEVSRTELTSSSRTSIQGTEKPTMSPDTSTRSVTMLSTFAGLTKSEERTIATQTGPHRATSQGTLTWDTSITTSQAGTHSAMTHGFSQLDLSTLTSRVPEYISGTSPPSVEKTSSSSSLLSLPAITSPSPVPTTLPESRPSSPVHLTSLPTSGLVKTTDMLASVASLPPNLGSTSHKIPTTSEDIKDTEKMYPSTNIAVTNVGTTTSEKESYSSVPAYSEPPKVTSPMVTSFNIRDTIVSTSMPGSSEITRIEMESTFSLAHGLKGTSTSQDPIVSTEKSAVLHKLTTGATETSRTEVASSRRTSIPGPDHSTESPDISTEVIPSLPISLGITESSNMTIITRTGPPLGSTSQGTFTLDTPTTSSRAGTHSMATQEFPHSEMTTVMNKDPEILSWTIPPSIEKTSFSSSLMPSPAMTSPPVSSTLPKTIHTTPSPMTSLLTPSLVMTTDTLGTSPEPTTSSPPNLSSTSHEILTTDEDTTAIEAMHPSTSTAATNVETTSSGHGSQSSVLADSEKTKATAPMDTTSTMGHTTVSTSMSVSSETTKIKRESTYSLTPGLRETSISQNASFSTDTSIVLSEVPTGTTAEVSRTEVTSSGRTSIPGPSQSTVLPEISTRTMTRLFASPTMTESAEMTIPTQTGPSGSTSQDTLTLDTSTTKSQAKTHSTLTQRFPHSEMTTLMSRGPGDMSWQSSPSLENPSSLPSLLSLPATTSPPPISSTLPVTISSSPLPVTSLLTSSPVTTTDMLHTSPELVTSSPPKLSHTSDERLTTGKDTTNTEAVHPSTNTAASNVEIPSSGHESPSSALADSETSKATSPMFITSTQEDTTVAISTPHFLETSRIQKESISSLSPKLRETGSSVETSSAIETSAVLSEVSIGATTEISRTEVTSSSRTSISGSAESTMLPEISTTRKIIKFPTSPILAESSEMTIKTQTSPPGSTSESTFTLDTSTTPSLVITHSTMTQRLPHSEITTLVSRGAGDVPRPSSLPVEETSPPSSQLSLSAMISPSPVSSTLPASSHSSSASVTSLLTPGQVKTTEVLDASAEPETSSPPSLSSTSVEILATSEVTTDTEKIHPFSNTAVTKVGTSSSGHESPSSVLPDSETTKATSAMGTISIMGDTSVSTLTPALSNTRKIQSEPASSLTTRLRETSTSEETSLATEANTVLSKVSTGATTEVSRTEAISFSRTSMSGPEQSTMSQDISIGTIPRISASSVLTESAKMTITTQTGPSESTLESTLNLNTATTPSWVETHSIVIQGFPHPEMTTSMGRGPGGVSWPSPPFVKETSPPSSPLSLPAVTSPHPVSTTFLAHIPPSPLPVTSLLTSGPATTTDILGTSTEPGTSSSSSLSTTSHERLTTYKDTAHTEAVHPSTNTGGTNVATTSSGYKSQSSVLADSSPMCTTSTMGDTSVLTSTPAFLETRRIQTELASSLTPGLRESSGSEGTSSGTKMSTVLSKVPTGATTEISKEDVTSIPGPAQSTISPDISTRTVSWFSTSPVMTESAEITMNTHTSPLGATTQGTSTLDTSSTTSLTMTHSTISQGFSHSQMSTLMRRGPEDVSWMSPPLLEKTRPSFSLMSSPATTSPSPVSSTLPESISSSPLPVTSLLTSGLAKTTDMLHKSSEPVTNSPANLSSTSVEILATSEVTTDTEKTHPSSNRTVTDVGTSSSGHESTSFVLADSQTSKVTSPMVITSTMEDTSVSTSTPGFFETSRIQTEPTSSLTLGLRKTSSSEGTSLATEMSTVLSGVPTGATAEVSRTEVTSSSRTSISGFAQLTVSPETSTETITRLPTSSIMTESAEMMIKTQTDPPGSTPESTHTVDISTTPNWVETHSTVTQRFSHSEMTTLVSRSPGDMLWPSQSSVEETSSASSLLSLPATTSPSPVSSTLVEDFPSASLPVTSLLNPGLVITTDRMGISREPGTSSTSNLSSTSHERLTTLEDTVDTEDMQPSTHTAVTNVRTSISGHESQSSVLSDSETPKATSPMGTTYTMGETSVSISTSDFFETSRIQIEPTSSLTSGLRETSSSERISSATEGSTVLSEVPSGATTEVSRTEVISSRGTSMSGPDQFTISPDISTEAITRLSTSPIMTESAESAITIETGSPGATSEGTLTLDTSTTTFWSGTHSTASPGFSHSEMTTLMSRTPGDVPWPSLPSVEEASSVSSSLSSPAMTSTSFFSTLPESISSSPHPVTALLTLGPVKTTDMLRTSSEPETSSPPNLSSTSAEILATSEVTKDREKIHPSSNTPVVNVGTVIYKHLSPSSVLADLVTTKPTSPMATTSTLGNTSVSTSTPAFPETMMTQPTSSLTSGLREISTSQETSSATERSASLSGMPTGATTKVSRTEALSLGRTSTPGPAQSTISPEISTETITRISTPLTTTGSAEMTITPKTGHSGASSQGTFTLDTSSRASWPGTHSAATHRSPHSGMTTPMSRGPEDVSWPSRPSVEKTSPPSSLVSLSAVTSPSPLYSTPSESSHSSPLRVTSLFTPVMMKTTDMLDTSLEPVTTSPPSMNITSDESLATSKATMETEAIQLSENTAVTQMGTISARQEFYSSYPGLPEPSKVTSPVVTSSTIKDIVSTTIPASSEITRIEMESTSTLTPTPRETSTSQEIHSATKPSTVPYKALTSATIEDSMTQVMSSSRGPSPDQSTMSQDISTEVITRLSTSPIKTESTEMTITTQTGSPGATSRGTLTLDTSTTFMSGTHSTASQGFSHSQMTALMSRTPGDVPWLSHPSVEEASSASFSLSSPVMTSSSPVSSTLPDSIHSSSLPVTSLLTSGLVKTTELLGTSSEPETSSPPNLSSTSAEILAITEVTTDTEKLEMTNVVTSGYTHESPSSVLADSVTTKATSSMGITYPTGDTNVLTSTPAFSDTSRIQTKSKLSLTPGLMETSISEETSSATEKSTVLSSVPTGATTEVSRTEAISSSRTSIPGPAQSTMSSDTSMETITRISTPLTRKESTDMAITPKTGPSGATSQGTFTLDSSSTASWPGTHSATTQRFPQSVVTTPMSRGPEDVSWPSPLSVEKNSPPSSLVSSSSVTSPSPLYSTPSGSSHSSPVPVTSLFTSIMMKATDMLDASLEPETTSAPNMNITSDESLAASKATTETEAIHVFENTAASHVETTSATEELYSSSPGFSEPTKVISPVVTSSSIRDNMVSTTMPGSSGITRIEIESMSSLTPGLRETRTSQDITSSTETSTVLYKMPSGATPEVSRTEVMPSSRTSIPGPAQSTMSLDISDEVVTRLSTSPIMTESAEITITTQTGYSLATSQVTLPLGTSMTFLSGTHSTMSQGLSHSEMTNLMSRGPESLSWTSPRFVETTRSSSSLTSLPLTTSLSPVSSTLLDSSPSSPLPVTSLILPGLVKTTEVLDTSSEPKTSSSPNLSSTSVEIPATSEIMTDTEKIHPSSNTAVAKVRTSSSVHESHSSVLADSETTITIPSMGITSAVDDTTVFTSNPAFSETRRIPTEPTFSLTPGFRETSTSEETTSITETSAVLYGVPTSATTEVSMTEIMSSNRIHIPDSDQSTMSPDIITEVITRLSSSSMMSESTQMTITTQKSSPGATAQSTLTLATTTAPLARTHSTVPPRFLHSEMTTLMSRSPENPSWKSSLFVEKTSSSSSLLSLPVTTSPSVSSTLPQSIPSSSFSVTSLLTPGMVKTTDTSTEPGTSLSPNLSGTSVEILAASEVTTDTEKIHPSSSMAVTNVGTTSSGHELYSSVSIHSEPSKATYPVGTPSSMAETSISTSMPANFETTGFEAEPFSHLTSGFRKTNMSLDTSSVTPTNTPSSPGSTHLLQSSKTDFTSSAKTSSPDWPPASQYTEIPVDIITPFNASPSITESTGITSFPESRFTMSVTESTHHLSTDLLPSAETISTGTVMPSLSEAMTSFATTGVPRAISGSGSPFSRTESGPGDATLSTIAESLPSSTPVPFSSSTFTTTDSSTIPALHEITSSSATPYRVDTSLGTESSTTEGRLVMVSTLDTSSQPGRTSSSPILDTRMTESVELGTVTSAYQVPSLSTRLTRTDGIMEHITKIPNEAAHRGTIRPVKGPQTSTSPASPKGLHTGGTKRMETTTTALKTTTTALKTTSRATLTTSVYTPTLGTLTPLNASMQMASTIPTEMMITTPYVFPDVPETTSSLATSLGAETSTALPRTTPSVFNRESETTASLVSRSGAERSPVIQTLDVSSSEPDTTASWVIHPAETIPTVSKTTPNFFHSELDTVSSTATSHGADVSSAIPTNISPSELDALTPLVTISGTDTSTTFPTLTKSPHETETRTTWLTHPAETSSTIPRTIPNFSHHESDATPSIATSPGAETSSAIPIMTVSPGAEDLVTSQVTSSGTDRNMTIPTLTLSPGEPKTIASLVTHPEAQTSSAIPTSTISPAVSRLVTSMVTSLAAKTSTTNRALTNSPGEPATTVSLVTHPAQTSPTVPWTTSIFFHSKSDTTPSMTTSHGAESSSAVPTPTVSTEVPGVVTPLVTSSRAVISTTIPILTLSPGEPETTPSMATSHGEEASSAIPTPTVSPGVPGVVTSLVTSSRAVTSTTIPILTFSLGEPETTPSMATSHGTEAGSAVPTVLPEVPGMVTSLVASSRAVTSTTLPTLTLSPGEPETTPSMATSHGAEASSTVPTVSPEVPGVVTSLVTSSSGVNSTSIPTLILSPGELETTPSMATSHGAEASSAVPTPTVSPGVSGVVTPLVTSSRAVTSTTIPILTLSSSEPETTPSMATSHGVEASSAVLTVSPEVPGMVTSLVTSSRAVTSTTIPTLTISSDEPETTTSLVTHSEAKMISAIPTLAVSPTVQGLVTSLVTSSGSETSAFSNLTVASSQPETIDSWVAHPGTEASSVVPTLTVSTGEPFTNISLVTHPAESSSTLPRTTSRFSHSELDTMPSTVTSPEAESSSAISTTISPGIPGVLTSLVTSSGRDISATFPTVPESPHESEATASWVTHPAVTSTTVPRTTPNYSHSEPDTTPSIATSPGAEATSDFPTITVSPDVPDMVTSQVTSSGTDTSITIPTLTLSSGEPETTTSFITYSETHTSSAIPTLPVSPGASKMLTSLVISSGTDSTTTFPTLTETPYEPETTAIQLIHPAETNTMVPRTTPKFSHSKSDTTLPVAITSPGPEASSAVSTTTISPDMSDLVTSLVPSSGTDTSTTFPTLSETPYEPETTATWLTHPAETSTTVSGTIPNFSHRGSDTAPSMVTSPGVDTRSGVPTTTIPPSIPGVVTSQVTSSATDTSTAIPTLTPSPGEPETTASSATHPGTQTGFTVPIRTVPSSEPDTMASWVTHPPQTSTPVSRTTSSFSHSSPDATPVMATSPRTEASSAVLTTISPGAPEMVTSQITSSGAATSTTVPTLTHSPGMPETTALLSTHPRTETSKTFPASTVFPQVSETTASLTIRPGAETSTALPTQTTSSLFTLLVTGTSRVDLSPTASPGVSAKTAPLSTHPGTETSTMIPTSTLSLGLLETTGLLATSSSAETSTSTLTLTVSPAVSGLSSASITTDKPQTVTSWNTETSPSVTSVGPPEFSRTVTGTTMTLIPSEMPTPPKTSHGEGVSPTTILRTTMVEATNLATTGSSPTVAKTTTTFNTLAGSLFTPLTTPGMSTLASESVTSRTSYNHRSWISTTSSYNRRYWTPATSTPVTSTFSPGISTSSIPSSTAATVPFMVPFTLNFTITNLQYEEDMRHPGSRKFNATERELQGLLKPLFRNSSLEYLYSGCRLASLRPEKDSSATAVDAICTHRPDPEDLGLDRERLYWELSNLTNGIQELGPYTLDRNSLYVNGFTHRSSMPTTSTPGTSTVDVGTSGTPSSSPSPTTAGPLLMPFTLNFTITNLQYEEDMRRTGSRKFNTMESVLQGLLKPLFKNTSVGPLYSGCRLTLLRPEKDGAATGVDAICTHRLDPKSPGLNREQLYWELSKLTNDIEELGPYTLDRNSLYVNGFTHQSSVSTTSTPGTSTVDLRTSGTPSSLSSPTIMAAGPLLVPFTLNFTITNLQYGEDMGHPGSRKFNTTERVLQGLLGPIFKNTSVGPLYSGCRLTSLRSEKDGAATGVDAICIHHLDPKSPGLNRERLYWELSQLTNGIKELGPYTLDRNSLYVNGFTHRTSVPTSSTPGTSTVDLGTSGTPFSLPSPATAGPLLVLFTLNFTITNLKYEEDMHRPGSRKFNTTERVLQTLLGPMFKNTSVGLLYSGCRLTLLRSEKDGAATGVDAICTHRLDPKSPGVDREQLYWELSQLTNGIKELGPYTLDRNSLYVNGFTHWIPVPTSSTPGTSTVDLGSGTPSSLPSPTTAGPLLVPFTLNFTITNLKYEEDMHCPGSRKFNTTERVLQSLLGPMFKNTSVGPLYSGCRLTLLRSEKDGAATGVDAICTHRLDPKSPGVDREQLYWELSQLTNGIKELGPYTLDRNSLYVNGFTHQTSAPNTSTPGTSTVDLGTSGTPSSLPSPTSAGPLLVPFTLNFTITNLQYEEDMHHPGSRKFNTTERVLQGLLGPMFKNTSVGLLYSGCRLTLLRPEKNGAATGMDAICSHRLDPKSPGLNREQLYWELSQLTHGIKELGPYTLDRNSLYVNGFTHRSSVAPTSTPGTSTVDLGTSGTPSSLPSPTTAVPLLVPFTLNFTITNLQYGEDMRHPGSRKFNTTERVLQGLLGPLFKNSSVGPLYSGCRLISLRSEKDGAATGVDAICTHHLNPQSPGLDREQLYWQLSQMTNGIKELGPYTLDRNSLYVNGFTHRSSGLTTSTPWTSTVDLGTSGTPSPVPSPTTTGPLLVPFTLNFTITNLQYEENMGHPGSRKFNITESVLQGLLKPLFKSTSVGPLYSGCRLTLLRPEKDGVATRVDAICTHRPDPKIPGLDRQQLYWELSQLTHSITELGPYTLDRDSLYVNGFTQRSSVPTTSTPGTFTVQPETSETPSSLPGPTATGPVLLPFTLNFTITNLQYEEDMRRPGSRKFNTTERVLQGLLMPLFKNTSVSSLYSGCRLTLLRPEKDGAATRVDAVCTHRPDPKSPGLDRERLYWKLSQLTHGITELGPYTLDRHSLYVNGFTHQSSMTTTRTPDTSTMHLATSRTPASLSGPMTASPLLVLFTINFTITNLRYEENMHHPGSRKFNTTERVLQGLLRPVFKNTSVGPLYSGCRLTLLRPKKDGAATKVDAICTYRPDPKSPGLDREQLYWELSQLTHSITELGPYTLDRDSLYVNGFTQRSSVPTTSIPGTPTVDLGTSGTPVSKPGPSAASPLLVLFTLNFTITNLRYEENMQHPGSRKFNTTERVLQGLLRSLFKSTSVGPLYSGCRLTLLRPEKDGTATGVDAICTHHPDPKSPRLDREQLYWELSQLTHNITELGPYALDNDSLFVNGFTHRSSVSTTSTPGTPTVYLGASKTPASIFGPSAASHLLILFTLNFTITNLRYEENMWPGSRKFNTTERVLQGLLRPLFKNTSVGPLYSGCRLTLLRPEKDGEATGVDAICTHRPDPTGPGLDREQLYLELSQLTHSITELGPYTLDRDSLYVNGFTHRSSVPTTSTGVVSEEPFTLNFTINNLRYMADMGQPGSLKFNITDNVMQHLLSPLFQRSSLGARYTGCRVIALRSVKNGAETRVDLLCTYLQPLSGPGLPIKQVFHELSQQTHGITRLGPYSLDKDSLYLNGYNEPGPDEPPTTPKPATTFLPPLSEATTAMGYHLKTLTLNFTISNLQYSPDMGKGSATFNSTEGVLQHLLRPLFQKSSMGPFYLGCQLISLRPEKDGAATGVDTTCTYHPDPVGPGLDIQQLYWELSQLTHGVTQLGFYVLDRDSLFINGYAPQNLSIRGEYQINFHIVNWNLSNPDPTSSEYITLLRDIQDKVTTLYKGSQLHDTFRFCLVTNLTMDSVLVTVKALFSSNLDPSLVEQVFLDKTLNASFHWLGSTYQLVDIHVTEMESSVYQPTSSSSTQHFYLNFTITNLPYSQDKAQPGTTNYQRNKRNIEDALNQLFRNSSIKSYFSDCQVSTFRSVPNRHHTGVDSLCNFSPLARRVDRVAIYEEFLRMTRNGTQLQNFTLDRSSVLVDGYSPNRNEPLTGNSDLPFWAVILIGLAGLLGVITCLICGVLVTTRRRKKEGEYNVQQQCPGYYQSHLDLEDLQ.

The segment covering 1–17 (MLKPSGLPGSSSPTRSL) has biased composition (low complexity). The interval 1-138 (MLKPSGLPGS…PRTRTSSTEG (138 aa)) is disordered. Residues 1 to 14451 (MLKPSGLPGS…EPLTGNSDLP (14451 aa)) are Extracellular-facing. 2 stretches are compositionally biased toward polar residues: residues 35–46 (TGATLSPKTSTG) and 56–138 (PFTS…STEG). A glycan (N-linked (GlcNAc...) asparagine) is linked at Asn139. Disordered regions lie at residues 160-180 (EKYT…ETPW), 198-229 (DSTA…TNPS), 265-287 (FSSP…LSSS), 396-554 (LGGT…STSV), 655-674 (VSKT…SYTM), 695-719 (SLGL…GHTK), and 740-888 (TSTF…RTTL). Residues 166 to 178 (TETSTTEGDSTET) show a composition bias toward low complexity. Positions 212–229 (PAETTVTDSHTPGRTNPS) are enriched in polar residues. 2 stretches are compositionally biased toward low complexity: residues 276–287 (SRISTSAPLSSS) and 396–413 (LGGT…STTL). 3 stretches are compositionally biased toward polar residues: residues 414–423 (VSEETNTHHS), 431–441 (GTLNTSMTPLE), and 460–478 (GFTT…SSSH). A glycan (N-linked (GlcNAc...) asparagine) is linked at Asn434. 2 stretches are compositionally biased toward low complexity: residues 485–497 (TTGS…SSST) and 508–525 (ATTS…ESTA). The segment covering 526–543 (QQFSEPQHTQWVETSPSM) has biased composition (polar residues). 4 stretches are compositionally biased toward polar residues: residues 696-706 (LGLTPLNTRHP), 740-780 (TSTF…NAAT), 787-796 (NATSPLTHPS), and 805-821 (SVLT…SPNI). Asn787 carries N-linked (GlcNAc...) asparagine glycosylation. The segment covering 823–846 (PTGTLTSESSESPSTLSLPSVSGV) has biased composition (low complexity). Polar residues-rich tracts occupy residues 847–860 (KTTF…THLF) and 869–888 (TSNP…RTTL). Asn930 and Asn957 each carry an N-linked (GlcNAc...) asparagine glycan. Composition is skewed to polar residues over residues 949 to 969 (SQTN…TWPE), 1092 to 1101 (GSSTPGRTSQ), 1124 to 1137 (GTSS…TATH), and 1301 to 1317 (SGSS…NTGS). Disordered regions lie at residues 949-981 (SQTN…LPSA), 1082-1101 (VSPS…RTSQ), 1121-1149 (PRDG…ARST), 1301-1378 (SGSS…NLTS), 1593-1641 (LGTQ…SSSS), and 1704-1757 (LSES…SPTT). The span at 1318-1328 (TWDPTTYITTT) shows a compositional bias: low complexity. 5 stretches are compositionally biased toward polar residues: residues 1334–1347 (SSAQ…VRTL), 1368–1378 (PKISSSPNLTS), 1596–1613 (QGRS…STDT), 1621–1633 (GPTN…PMDN), and 1704–1745 (LSES…GSQM). Residue Asn1375 is glycosylated (N-linked (GlcNAc...) asparagine). The N-linked (GlcNAc...) asparagine glycan is linked to Asn1633. Low complexity predominate over residues 1746–1757 (STSIPLTSSPTT). Residues Asn1840, Asn1877, and Asn1890 are each glycosylated (N-linked (GlcNAc...) asparagine). Polar residues predominate over residues 1846-1908 (DLSHGVHTSS…TEKSEVSSSI (63 aa)). 4 disordered regions span residues 1846–1930 (DLSH…PGNR), 2010–2033 (VSAS…YSSA), 2064–2140 (WPST…GASI), and 2153–2177 (RSDV…SAGT). Composition is skewed to low complexity over residues 2019 to 2033 (SVSS…YSSA) and 2064 to 2085 (WPST…NPSS). The segment covering 2111 to 2132 (HGPQNTAASTLNTDASSVTGLS) has biased composition (polar residues). N-linked (GlcNAc...) asparagine glycans are attached at residues Asn2345 and Asn2375. 2 disordered regions span residues 2393–2455 (PTSI…PFTI) and 2566–2591 (SESK…ETSA). 2 stretches are compositionally biased toward low complexity: residues 2417–2429 (TSTT…TSPS) and 2566–2583 (SESK…TPTS). Asn2737 carries N-linked (GlcNAc...) asparagine glycosylation. Disordered stretches follow at residues 2789–2822 (TTGS…LTMN), 2838–2885 (TATQ…TWGI), 2901–3006 (DTKS…AMTS), 3019–3052 (TGQA…TSRK), 3083–3148 (TLNM…ASSI), 3172–3235 (SQAA…PETT), 3251–3276 (ALGS…PTEN), 3299–3392 (GTPG…KTET), 3415–3436 (TSRS…TSGS), and 3462–3491 (VSLP…VTSP). The span at 2803–2819 (SGSTHSTGTKTFSSLPL) shows a compositional bias: polar residues. A compositionally biased stretch (low complexity) spans 2864 to 2875 (SASSSPSKAFAS). Polar residues-rich tracts occupy residues 2876 to 2885 (LTTAPPTWGI) and 2901 to 2918 (DTKS…NTIP). Over residues 2919 to 2931 (DSDASTASSSLSK) the composition is skewed to low complexity. Over residues 2942 to 2968 (MTSTKAISASSFQSTGFTETPEGSASP) the composition is skewed to polar residues. The span at 3019 to 3035 (TGQAARSGSSSSPISLS) shows a compositional bias: low complexity. The segment covering 3041 to 3052 (SFLSPTASTSRK) has biased composition (polar residues). Asn3085 carries an N-linked (GlcNAc...) asparagine glycan. Residues 3107–3116 (TAETQTLTFT) are compositionally biased toward low complexity. 2 stretches are compositionally biased toward polar residues: residues 3117–3132 (PSET…SPTE) and 3172–3181 (SQAAQGNSTW). An N-linked (GlcNAc...) asparagine glycan is attached at Asn3178. A compositionally biased stretch (low complexity) spans 3188–3200 (TGSSPAGTSPGSP). Polar residues-rich tracts occupy residues 3201 to 3214 (EMST…SKEP) and 3251 to 3261 (ALGSGSTSISH). Low complexity predominate over residues 3263–3274 (PTGTTSPTKSPT). 2 stretches are compositionally biased toward polar residues: residues 3299 to 3342 (GTPG…TTGM) and 3360 to 3383 (VSLS…SSLT). 2 stretches are compositionally biased toward low complexity: residues 3424 to 3436 (SSTS…TSGS) and 3477 to 3491 (PSGG…VTSP). The N-linked (GlcNAc...) asparagine glycan is linked to Asn3501. Positions 3538-3555 (ISTTITTMGTNSISTTTP) are enriched in low complexity. Disordered stretches follow at residues 3538–3588 (ISTT…STAA), 3644–3672 (TPSS…TAST), 3794–3829 (RSSG…GQVP), 3843–3879 (AKTP…TPSA), 3914–3982 (LESG…SPVV), 4024–4056 (MDTS…SSKR), 4094–4121 (AMQT…WTGT), and 4138–4166 (FSKG…VPIH). 2 stretches are compositionally biased toward polar residues: residues 3812–3824 (QTST…TSAH) and 3848–3868 (ATFQ…TSDS). A compositionally biased stretch (low complexity) spans 3916–3927 (SGTTSSPSWKSS). The segment covering 3946–3982 (PSTNTVETTGWVTSSEHASHSTIPAHSASSKLTSPVV) has biased composition (polar residues). A compositionally biased stretch (low complexity) spans 4026 to 4041 (TSSTTQTSIISSPGST). The segment covering 4095–4121 (MQTSPPGATSLSAPTLDTSATASWTGT) has biased composition (polar residues). Positions 4152 to 4164 (SVEETSSSSSLVP) are enriched in low complexity. Residues Asn4220, Asn4498, Asn4606, Asn4613, and Asn4624 are each glycosylated (N-linked (GlcNAc...) asparagine). 3 disordered regions span residues 4728–4748 (VKDV…PSSQ), 4845–4961 (HSTV…TRLS), and 5026–5066 (VSWT…KLSS). The span at 4856 to 4876 (KVTSPNVTTSTMEDTTISRSI) shows a compositional bias: polar residues. Residue Asn4861 is glycosylated (N-linked (GlcNAc...) asparagine). Low complexity-rich tracts occupy residues 4877 to 4914 (PKSS…ETST) and 4924 to 4939 (TTEV…SSTS). Polar residues-rich tracts occupy residues 4944–4961 (DQST…TRLS) and 5026–5037 (VSWTSPPSVDKT). Low complexity predominate over residues 5038 to 5047 (SSPSSFLSSP). Residues 5048–5059 (AMTTPSLISSTL) are compositionally biased toward polar residues. Residues Asn5096, Asn5131, and Asn5228 are each glycosylated (N-linked (GlcNAc...) asparagine). 3 disordered regions span residues 5128-5149 (VKAN…ETPK), 5221-5249 (EVSS…DTFT), and 5271-5303 (TQAS…TVTQ). Over residues 5221–5234 (EVSSTGVNSSSKIS) the composition is skewed to polar residues. Over residues 5280 to 5293 (SHSTLPLDTSTTLS) the composition is skewed to low complexity. Polar residues predominate over residues 5294–5303 (QGGTHSTVTQ). N-linked (GlcNAc...) asparagine glycosylation is present at Asn5320. Disordered stretches follow at residues 5328-5365 (PVEE…PLPV), 5381-5400 (GTTS…SITH), 5426-5507 (NVGT…TNTA), 5519-5538 (ASRT…DRPT), 5624-5654 (PVEE…ESIP), 5675-5696 (LGTT…PTQE), and 5727-5747 (ISGH…KATS). 2 stretches are compositionally biased toward low complexity: residues 5333 to 5365 (SSVS…PLPV) and 5381 to 5393 (GTTS…SSPP). Residue Asn5394 is glycosylated (N-linked (GlcNAc...) asparagine). Polar residues-rich tracts occupy residues 5426 to 5441 (NVGT…SSVL) and 5447 to 5485 (SKAT…TASL). The N-linked (GlcNAc...) asparagine glycan is linked to Asn5470. Low complexity-rich tracts occupy residues 5495–5504 (SEKTSSTTET), 5520–5532 (SRTE…TSIS), 5633–5654 (SLMS…ESIP), and 5675–5688 (LGTT…SSPP). Asn5689 carries N-linked (GlcNAc...) asparagine glycosylation. Positions 5727 to 5737 (ISGHESQSSVP) are enriched in polar residues. An N-linked (GlcNAc...) asparagine glycan is attached at Asn5863. Disordered stretches follow at residues 5882–5931 (STAS…SSPV) and 6054–6078 (STST…TPEL). Polar residues predominate over residues 5903 to 5916 (TTTMSRSTKGVSWQ). A compositionally biased stretch (low complexity) spans 5917 to 5928 (SPPSVEETSSPS). Residues 6054–6063 (STSTPGSPET) show a composition bias toward polar residues. N-linked (GlcNAc...) asparagine glycosylation is present at Asn6088. Disordered regions lie at residues 6122-6149 (PASA…PLTI), 6219-6251 (NSLS…LVSV), 6399-6425 (SRTE…DTST), 6438-6459 (TKSE…SQGT), 6497-6545 (ISGT…TSLP), and 6682-6714 (TTGA…PDIS). Low complexity-rich tracts occupy residues 6134–6149 (SPEA…PLTI), 6226–6251 (PLLV…LVSV), and 6399–6410 (SRTELTSSSRTS). Composition is skewed to polar residues over residues 6411–6425 (IQGT…DTST) and 6445–6459 (IATQ…SQGT). Low complexity predominate over residues 6500–6523 (TSPPSVEKTSSSSSLLSLPAITSP). Composition is skewed to polar residues over residues 6530-6545 (LPES…TSLP) and 6683-6699 (TGAT…SRRT). An N-linked (GlcNAc...) asparagine glycan is attached at Asn6732. Disordered regions lie at residues 6800 to 6822 (SFSS…TLPK), 6845 to 6865 (TLGT…STSH), and 6886 to 6939 (TAAT…SETT). Over residues 6848-6864 (TSPEPTTSSPPNLSSTS) the composition is skewed to low complexity. An N-linked (GlcNAc...) asparagine glycan is attached at Asn6859. The span at 6886–6905 (TAATNVETTSSGHGSQSSVL) shows a compositional bias: polar residues. Residues 6919–6938 (TTSTMGHTTVSTSMSVSSET) are compositionally biased toward low complexity. The N-linked (GlcNAc...) asparagine glycan is linked to Asn6961. Disordered stretches follow at residues 6981 to 7004 (AEVS…QSTV), 7028 to 7107 (MTIP…ATTS), 7143 to 7208 (TSPE…TSKA), 7279 to 7302 (SRTE…MLPE), 7320 to 7345 (ESSE…TLDT), 7360 to 7427 (QRLP…SLLT), 7437 to 7456 (LDAS…STSV), 7463 to 7503 (EVTT…ETTK), 7527 to 7553 (SNTR…SEET), 7577 to 7597 (TEAI…TMSQ), 7726 to 7782 (ATTT…TTSS), 7825 to 7849 (LASS…TKMS), 7908 to 7927 (HTSP…TSST), and 7970 to 8000 (PSFS…SPLP). The span at 7028–7038 (MTIPTQTGPSG) shows a compositional bias: polar residues. The segment covering 7039–7055 (STSQDTLTLDTSTTKSQ) has biased composition (low complexity). Polar residues predominate over residues 7057 to 7075 (KTHSTLTQRFPHSEMTTLM). Over residues 7086–7105 (SSPSLENPSSLPSLLSLPAT) the composition is skewed to low complexity. A compositionally biased stretch (polar residues) spans 7166-7200 (GKDTTNTEAVHPSTNTAASNVEIPSSGHESPSSAL). Low complexity predominate over residues 7279 to 7298 (SRTEVTSSSRTSISGSAEST). 3 stretches are compositionally biased toward polar residues: residues 7322-7345 (SEMT…TLDT), 7360-7371 (QRLPHSEITTLV), and 7390-7402 (SPPS…SAMI). Low complexity-rich tracts occupy residues 7403–7427 (SPSP…SLLT) and 7439–7455 (ASAE…SSTS). Residues 7474–7484 (FSNTAVTKVGT) are compositionally biased toward polar residues. The span at 7485–7494 (SSSGHESPSS) shows a compositional bias: low complexity. Residues 7733–7749 (GTSTEPGTSSSSSLSTT) show a composition bias toward low complexity. Residues 7750–7765 (SHERLTTYKDTAHTEA) show a composition bias toward basic and acidic residues. Positions 7768-7782 (PSTNTGGTNVATTSS) are enriched in polar residues. Composition is skewed to low complexity over residues 7835–7846 (ESSGSEGTSSGT), 7915–7927 (TTQG…TSST), and 7973–8000 (SLMS…SPLP). 2 N-linked (GlcNAc...) asparagine glycosylation sites follow: Asn8029 and Asn8055. Disordered stretches follow at residues 8042-8078 (EVTT…LADS), 8111-8134 (IQTE…GTSL), 8312-8331 (GISR…TSHE), 8342-8389 (TEDM…YTMG), 8411-8472 (TSSL…ISPD), 8604-8624 (MLRT…STSA), 8674-8741 (SPMA…TKVS), and 8775-8880 (TPLT…HSSP). A compositionally biased stretch (polar residues) spans 8052 to 8078 (PSSNRTVTDVGTSSSGHESTSFVLADS). The span at 8319 to 8328 (TSSTSNLSST) shows a compositional bias: low complexity. Asn8324 carries N-linked (GlcNAc...) asparagine glycosylation. Positions 8345 to 8389 (MQPSTHTAVTNVRTSISGHESQSSVLSDSETPKATSPMGTTYTMG) are enriched in polar residues. Residues 8607-8624 (TSSEPETSSPPNLSSTSA) show a composition bias toward low complexity. 2 N-linked (GlcNAc...) asparagine glycosylation sites follow: Asn8618 and Asn8684. Polar residues-rich tracts occupy residues 8674 to 8740 (SPMA…TTKV) and 8781 to 8810 (GSAE…SSRA). Low complexity predominate over residues 8850–8880 (TSPPSSLVSLSAVTSPSPLYSTPSESSHSSP). Asn8913 carries an N-linked (GlcNAc...) asparagine glycan. Disordered stretches follow at residues 8995-9018 (ESTS…SATK) and 9147-9168 (SLSS…DSIH). Residue Asn9202 is glycosylated (N-linked (GlcNAc...) asparagine). Low complexity predominate over residues 9294–9307 (SISEETSSATEKST). Positions 9294–9460 (SISEETSSAT…TPSGSSHSSP (167 aa)) are disordered. 2 stretches are compositionally biased toward polar residues: residues 9308-9357 (VLSS…STPL) and 9374-9412 (SGAT…TTPM). Residues 9431 to 9460 (SPPSSLVSSSSVTSPSPLYSTPSGSSHSSP) show a composition bias toward low complexity. An N-linked (GlcNAc...) asparagine glycan is attached at Asn9493. Disordered stretches follow at residues 9611–9635 (ATPE…AQST), 9726–9753 (SSSS…SPSS), 9771–9791 (VLDT…STSV), and 9869–9890 (TEPT…ETTS). Polar residues predominate over residues 9621–9635 (MPSSRTSIPGPAQST). 2 stretches are compositionally biased toward low complexity: residues 9774-9790 (TSSE…SSTS) and 9881-9890 (ETSTSEETTS). A glycan (N-linked (GlcNAc...) asparagine) is linked at Asn9785. Asn10075 and Asn10173 each carry an N-linked (GlcNAc...) asparagine glycan. Disordered stretches follow at residues 10175 to 10218 (SLDT…PPAS) and 10445 to 10469 (TIRP…TGGT). Positions 10178 to 10193 (TSSVTPTNTPSSPGST) are enriched in low complexity. Over residues 10194-10212 (HLLQSSKTDFTSSAKTSSP) the composition is skewed to polar residues. Asn10510 is a glycosylation site (N-linked (GlcNAc...) asparagine). The segment covering 10544–10573 (SLGAETSTALPRTTPSVFNRESETTASLVS) has biased composition (polar residues). Disordered stretches follow at residues 10544–10590 (SLGA…DVSS) and 10689–10719 (ETSS…PGAE). Asn10700 is a glycosylation site (N-linked (GlcNAc...) asparagine). Over residues 10708-10719 (ATPSIATSPGAE) the composition is skewed to polar residues. Asn10749 carries N-linked (GlcNAc...) asparagine glycosylation. Residues 10849–10860 (TTPSMTTSHGAE) are compositionally biased toward polar residues. Disordered stretches follow at residues 10849–10872 (TTPS…TVST), 10898–10926 (LSPG…TPTV), and 11003–11036 (LPTL…TVSP). The segment covering 10861–10872 (SSSAVPTPTVST) has biased composition (low complexity). The segment covering 11003 to 11018 (LPTLTLSPGEPETTPS) has biased composition (low complexity). The N-linked (GlcNAc...) asparagine glycan is linked to Asn11053. A disordered region spans residues 11072 to 11092 (SMATSHGAEASSAVPTPTVSP). Residues Asn11224 and Asn11263 are each glycosylated (N-linked (GlcNAc...) asparagine). 2 stretches are compositionally biased toward polar residues: residues 11269–11284 (HPAE…TSRF) and 11358–11381 (STTV…SIAT). Disordered stretches follow at residues 11269 to 11301 (HPAE…SPEA), 11358 to 11400 (STTV…SPDV), 11508 to 11537 (KFSH…STTT), 11583 to 11724 (ETST…TSPR), 11836 to 11861 (SPTA…TSTM), and 11913 to 11937 (QTVT…FSRT). Asn11367 is a glycosylation site (N-linked (GlcNAc...) asparagine). Composition is skewed to polar residues over residues 11583-11594 (ETSTTVSGTIPN), 11631-11651 (VTSQ…TLTP), and 11658-11672 (TTAS…QTGF). The N-linked (GlcNAc...) asparagine glycan is linked to Asn11594. Residues 11700 to 11717 (PVSRTTSSFSHSSPDATP) show a composition bias toward low complexity. 2 stretches are compositionally biased toward polar residues: residues 11849-11861 (PLST…TSTM) and 11913-11928 (QTVT…SVTS). Tandem repeats lie at residues 12067–12223 (AATV…PSPT), 12224–12381 (TAGP…PTIM), 12382–12537 (AAGP…PSPA), 12538–12692 (TAGP…PSPT), 12693–12848 (TAGP…PSPT), 12849–13004 (SAGP…PSPT), 13005–13160 (TAVP…PSPT), 13161–13316 (TTGP…PGPT), 13317–13472 (ATGP…SGPM), 13473–13628 (TASP…PGPS), 13629–13784 (AASP…FGPS), and 13785–13939 (AASH…RYMA). Residues 12067–13939 (AATVPFMVPF…FTINNLRYMA (1873 aa)) are 12 X approximate tandem repeats. The region spanning 12072–12193 (FMVPFTLNFT…NSLYVNGFTH (122 aa)) is the SEA 1 domain. Residues Asn12079, Asn12100, and Asn12116 are each glycosylated (N-linked (GlcNAc...) asparagine). Cys12126 and Cys12146 are joined by a disulfide. N-linked (GlcNAc...) asparagine glycosylation occurs at Asn12168. Residues 12196 to 12226 (SMPTTSTPGTSTVDVGTSGTPSSSPSPTTAG) are disordered. The SEA 2 domain maps to 12228–12349 (LLMPFTLNFT…NSLYVNGFTH (122 aa)). N-linked (GlcNAc...) asparagine glycosylation is found at Asn12235 and Asn12272. Cys12282 and Cys12302 are oxidised to a cystine. The disordered stretch occupies residues 12353-12376 (VSTTSTPGTSTVDLRTSGTPSSLS). 3 SEA domains span residues 12386-12507 (LLVP…GFTH), 12542-12663 (LLVL…GFTH), and 12697-12818 (LLVP…GFTH). Asn12393, Asn12414, and Asn12430 each carry an N-linked (GlcNAc...) asparagine glycan. Cys12440 and Cys12460 are disulfide-bonded. N-linked (GlcNAc...) asparagine glycosylation is found at Asn12549, Asn12570, and Asn12586. Cys12596 and Cys12616 form a disulfide bridge. Asn12704, Asn12725, and Asn12741 each carry an N-linked (GlcNAc...) asparagine glycan. Cys12751 and Cys12771 form a disulfide bridge. A compositionally biased stretch (polar residues) spans 12819–12834 (QTSAPNTSTPGTSTVD). The interval 12819 to 12849 (QTSAPNTSTPGTSTVDLGTSGTPSSLPSPTS) is disordered. The N-linked (GlcNAc...) asparagine glycan is linked to Asn12824. The span at 12835–12849 (LGTSGTPSSLPSPTS) shows a compositional bias: low complexity. Residues 12853 to 12974 (LLVPFTLNFT…NSLYVNGFTH (122 aa)) form the SEA 6 domain. Asn12860, Asn12881, and Asn12897 each carry an N-linked (GlcNAc...) asparagine glycan. Cys12907 and Cys12927 form a disulfide bridge. A compositionally biased stretch (polar residues) spans 12978–12990 (VAPTSTPGTSTVD). The segment at 12978–13003 (VAPTSTPGTSTVDLGTSGTPSSLPSP) is disordered. The segment covering 12991 to 13003 (LGTSGTPSSLPSP) has biased composition (low complexity). SEA domains follow at residues 13009–13130 (LLVP…GFTH) and 13165–13286 (LLVP…GFTQ). 3 N-linked (GlcNAc...) asparagine glycosylation sites follow: Asn13016, Asn13037, and Asn13053. Cys13063 and Cys13083 form a disulfide bridge. Residues Asn13172 and Asn13193 are each glycosylated (N-linked (GlcNAc...) asparagine). An intrachain disulfide couples Cys13219 to Cys13239. The span at 13291–13313 (PTTSTPGTFTVQPETSETPSSLP) shows a compositional bias: polar residues. The segment at 13291 to 13317 (PTTSTPGTFTVQPETSETPSSLPGPTA) is disordered. SEA domains are found at residues 13321–13442 (VLLP…GFTH) and 13477–13598 (LLVL…GFTQ). N-linked (GlcNAc...) asparagine glycosylation is found at Asn13328, Asn13349, and Asn13365. Cys13375 and Cys13395 form a disulfide bridge. 3 N-linked (GlcNAc...) asparagine glycosylation sites follow: Asn13484, Asn13505, and Asn13521. Cysteines 13531 and 13551 form a disulfide. Residues 13603–13621 (PTTSIPGTPTVDLGTSGTP) are compositionally biased toward polar residues. Residues 13603-13625 (PTTSIPGTPTVDLGTSGTPVSKP) form a disordered region. SEA domains lie at 13633–13754 (LLVL…GFTH), 13789–13909 (LLIL…GFTH), 13922–14043 (SEEP…GYNE), and 14073–14193 (HLKT…GYAP). N-linked (GlcNAc...) asparagine glycans are attached at residues Asn13640 and Asn13661. Cys13687 and Cys13707 form a disulfide bridge. N-linked (GlcNAc...) asparagine glycosylation is found at Asn13733, Asn13744, Asn13796, Asn13816, Asn13832, Asn13929, and Asn13950. A disulfide bridge connects residues Cys13976 and Cys13996. N-linked (GlcNAc...) asparagine glycosylation is found at Asn14080 and Asn14100. A disulfide bridge links Cys14126 with Cys14146. N-linked (GlcNAc...) asparagine glycans are attached at residues Asn14195, Asn14212, Asn14254, Asn14287, Asn14326, and Asn14363. SEA domains lie at 14198-14309 (IRGE…EMES) and 14319-14438 (STQH…GYSP). Residues Cys14373 and Cys14393 are joined by a disulfide bond. 2 N-linked (GlcNAc...) asparagine glycosylation sites follow: Asn14417 and Asn14423. The chain crosses the membrane as a helical span at residues 14452–14472 (FWAVILIGLAGLLGVITCLIC). Topologically, residues 14473-14507 (GVLVTTRRRKKEGEYNVQQQCPGYYQSHLDLEDLQ) are cytoplasmic.

Binds to MSLN. Binding to MSLN mediates heterotypic cell adhesion. This may contribute to the metastasis of ovarian cancer to the peritoneum by initiating cell attachment to the mesothelial epithelium via binding to MSLN. Heavily O-glycosylated; expresses both type 1 and type 2 core glycans. In terms of processing, heavily N-glycosylated; expresses primarily high mannose and complex bisecting type N-linked glycans. Post-translationally, may be phosphorylated. Phosphorylation of the intracellular C-terminal domain may induce proteolytic cleavage and the liberation of the extracellular domain into the extracellular space. May contain numerous disulfide bridges. Association of several molecules of the secreted form may occur through interchain disulfide bridges providing an extraordinarily large gel-like matrix in the extracellular space or in the lumen of secretory ducts. In terms of tissue distribution, expressed in corneal and conjunctival epithelia (at protein level). Overexpressed in ovarian carcinomas and ovarian low malignant potential (LMP) tumors as compared to the expression in normal ovarian tissue and ovarian adenomas.

The protein localises to the cell membrane. Its subcellular location is the secreted. The protein resides in the extracellular space. Its function is as follows. Thought to provide a protective, lubricating barrier against particles and infectious agents at mucosal surfaces. The chain is Mucin-16 from Homo sapiens (Human).